Here is a 698-residue protein sequence, read N- to C-terminus: MNPIVKSFEYGQHTVTLETGVIARQADAAVLASMGDTTVLVTVVGKKVADLSRDFFPLTVNYQEKTYAAGKIPGGFFKREGRPSEDETLIARLIDRPIRPLFPNGFKNEVQVIITVVSVDPQIEPDIVSMIGTSAALAISGIPFSGPLGAARVGYINDEYVLNPTVDQLATSSLNLVVAGTKAAVLMVESEAKALAEEIMLGAVTYGHDQQQVVVDAIAEFKAEAGKPTWDWTAPVQDQALVAKIKELAEAGMTEAYQIEVKQDRYVQVGIVKAAAKAALVAENPDVDTREVDNLLGSLEKSVVRGRIISGKPRIDGREPDMIRALSVLAGVLPRTHGSSLFTRGETQALVTCTLGTERDAQKIDSIMGERTNRFMLHYNFPPYSVGETGMVGSPKRREIGHGKLAWRGMNAVMPSAEEFPYSIRVVSEITESNGSSSMASVCGTSLALMDAGVPIKTSVAGIAMGLVKEGDDFVVLSDILGDEDHLGDMDFKVAGTRDGITALQMDIKIEGITKEIMDIALQQAYGARVHILNVMDQAIGTHRGDISAHAPRITTIKINPEKIRDVIGKGGAVIRALTEETGTTIELDDNGTVKIASSNGEATKEAIRRIEEITAEVEVGRIYNGKVIRIVDFGAFVNILPGKDGLVHISQISDERVANVSDHLEMNQEVAVKVMEVDRQGRVRLSIKEAQAKETAE.

2 residues coordinate Mg(2+): aspartate 485 and aspartate 491. In terms of domain architecture, KH spans proline 552 to isoleucine 611. In terms of domain architecture, S1 motif spans glycine 621 to lysine 689.

The protein belongs to the polyribonucleotide nucleotidyltransferase family. As to quaternary structure, component of the RNA degradosome, which is a multiprotein complex involved in RNA processing and mRNA degradation. Requires Mg(2+) as cofactor.

It is found in the cytoplasm. It carries out the reaction RNA(n+1) + phosphate = RNA(n) + a ribonucleoside 5'-diphosphate. Involved in mRNA degradation. Catalyzes the phosphorolysis of single-stranded polyribonucleotides processively in the 3'- to 5'-direction. In Shewanella frigidimarina (strain NCIMB 400), this protein is Polyribonucleotide nucleotidyltransferase.